Consider the following 240-residue polypeptide: Sugar fermentation stimulation protein homolog (240 aa).

Belongs to the SfsA family.

This is Sugar fermentation stimulation protein homolog from Saccharolobus islandicus (strain M.16.4 / Kamchatka #3) (Sulfolobus islandicus).